The primary structure comprises 82 residues: Small ribosomal subunit protein uS17 (82 aa).

The protein belongs to the universal ribosomal protein uS17 family. In terms of assembly, part of the 30S ribosomal subunit.

In terms of biological role, one of the primary rRNA binding proteins, it binds specifically to the 5'-end of 16S ribosomal RNA. In Rickettsia typhi (strain ATCC VR-144 / Wilmington), this protein is Small ribosomal subunit protein uS17.